The following is a 457-amino-acid chain: MENSTGLKSSLKTRHIVMLSLGGAIGSGLFLGSGKVIAQAGPSVLLSYVLAGLTLYVVMYGVGKMVIHQDDHKAGMAGVVAPFIGDHWAHFADWVYWATWMAVLIAEEAGVSTFLAILIPGVPLWVFALVVAVLGTAINLWSVKAFAETEYWLAFIKVAVILLLIALGIYLLVINDAHLGFVADSAQKVTTKSTAPSFAPNGFSGFLTSLLVVIFSFGGSELAAITVAETENPKVAIPRAIRGVLIRIISFYVIPIFLFLHLLPWSEVSNPDAASPFATIFARVGIPHADKIVLVIIVIAIFSAVNSAIYATSRSLYSRIQGSSTYVGKKLGKLSKNQVPTNAILVSSFVLFIGVLLSAVLGDGFWQFVAGSISFTISIVWILLLVAALVLYFKHKEVTNWFVKLATLVVLIALSLVFIMQIITNPWTLSVFALVICLLSYFSYRKKKSIIEKTFIL.

12 consecutive transmembrane segments (helical) span residues 16–36, 43–63, 91–111, 114–134, 154–174, 205–225, 243–263, 292–312, 342–362, 373–393, 403–423, and 424–444; these read IVMLSLGGAIGSGLFLGSGKV, SVLLSYVLAGLTLYVVMYGVG, FADWVYWATWMAVLIAEEAGV, FLAILIPGVPLWVFALVVAVL, AFIKVAVILLLIALGIYLLVI, GFLTSLLVVIFSFGGSELAAI, GVLIRIISFYVIPIFLFLHLL, IVLVIIVIAIFSAVNSAIYAT, NAILVSSFVLFIGVLLSAVLG, ISFTISIVWILLLVAALVLYF, VKLATLVVLIALSLVFIMQII, and TNPWTLSVFALVICLLSYFSY.

Belongs to the amino acid-polyamine-organocation (APC) superfamily. Amino acid transporter (AAT) (TC 2.A.3.1) family.

The protein localises to the cell membrane. Its function is as follows. Involved in phenylalanine and tyrosine uptake. Also has affinity for tryptophan. Plays no significant role in the excretion of accumulated phenylalanine. In Lactococcus lactis subsp. cremoris (strain MG1363), this protein is Aromatic amino acid permease FywP.